Reading from the N-terminus, the 221-residue chain is Thiamine-phosphate synthase (221 aa).

Residues 44–48 (QFREK) and Asn79 contribute to the 4-amino-2-methyl-5-(diphosphooxymethyl)pyrimidine site. Mg(2+)-binding residues include Asp80 and Asp99. Ser117 contributes to the 4-amino-2-methyl-5-(diphosphooxymethyl)pyrimidine binding site. 143 to 145 (TSS) contributes to the 2-[(2R,5Z)-2-carboxy-4-methylthiazol-5(2H)-ylidene]ethyl phosphate binding site. Lys146 provides a ligand contact to 4-amino-2-methyl-5-(diphosphooxymethyl)pyrimidine. Residues Gly175 and 195–196 (IS) contribute to the 2-[(2R,5Z)-2-carboxy-4-methylthiazol-5(2H)-ylidene]ethyl phosphate site.

It belongs to the thiamine-phosphate synthase family. The cofactor is Mg(2+).

It carries out the reaction 2-[(2R,5Z)-2-carboxy-4-methylthiazol-5(2H)-ylidene]ethyl phosphate + 4-amino-2-methyl-5-(diphosphooxymethyl)pyrimidine + 2 H(+) = thiamine phosphate + CO2 + diphosphate. The enzyme catalyses 2-(2-carboxy-4-methylthiazol-5-yl)ethyl phosphate + 4-amino-2-methyl-5-(diphosphooxymethyl)pyrimidine + 2 H(+) = thiamine phosphate + CO2 + diphosphate. The catalysed reaction is 4-methyl-5-(2-phosphooxyethyl)-thiazole + 4-amino-2-methyl-5-(diphosphooxymethyl)pyrimidine + H(+) = thiamine phosphate + diphosphate. Its pathway is cofactor biosynthesis; thiamine diphosphate biosynthesis; thiamine phosphate from 4-amino-2-methyl-5-diphosphomethylpyrimidine and 4-methyl-5-(2-phosphoethyl)-thiazole: step 1/1. Its function is as follows. Condenses 4-methyl-5-(beta-hydroxyethyl)thiazole monophosphate (THZ-P) and 2-methyl-4-amino-5-hydroxymethyl pyrimidine pyrophosphate (HMP-PP) to form thiamine monophosphate (TMP). The protein is Thiamine-phosphate synthase of Geobacillus kaustophilus (strain HTA426).